A 95-amino-acid chain; its full sequence is Opiscorpine-4 (95 aa).

An N-terminal signal peptide occupies residues 1-19 (MNNKLTALIFLGLLAIASC). In terms of domain architecture, BetaSPN-type CS-alpha/beta spans 55–95 (EFMCVANIDMTKSCDTHCQKASGEKGYCHGTKCKCGVPLSY). 3 disulfide bridges follow: Cys-58/Cys-82, Cys-68/Cys-87, and Cys-72/Cys-89.

Belongs to the long chain scorpion toxin family. Class 3 subfamily. As to expression, expressed by the venom gland.

Its subcellular location is the secreted. Its function is as follows. Has antimicrobial activity against yeasts and bacteria. In Opistophthalmus carinatus (African yellow leg scorpion), this protein is Opiscorpine-4.